Here is a 146-residue protein sequence, read N- to C-terminus: Probable calcium-binding protein CML40 (146 aa).

One can recognise an EF-hand 1 domain in the interval 7-42; that stretch reads NKRDEYQRVFSCFDKSHQGKVSVSTIERCVDAIKSG. The tract at residues 44–65 is disordered; sequence RAVVDQEDTTNPNPEESTDDKS. One can recognise an EF-hand 2 domain in the interval 116 to 146; the sequence is KSLKDCEVMISQFDINRDGIINFDEFRAMMQ. Ca(2+) contacts are provided by D129, N131, D133, and E140.

Functionally, potential calcium sensor. This is Probable calcium-binding protein CML40 (CML40) from Arabidopsis thaliana (Mouse-ear cress).